A 148-amino-acid chain; its full sequence is Macrodomain Ter protein (148 aa).

It belongs to the MatP family. In terms of assembly, homodimer.

The protein resides in the cytoplasm. Functionally, required for spatial organization of the terminus region of the chromosome (Ter macrodomain) during the cell cycle. Prevents early segregation of duplicated Ter macrodomains during cell division. Binds specifically to matS, which is a 13 bp signature motif repeated within the Ter macrodomain. The sequence is that of Macrodomain Ter protein from Aliivibrio salmonicida (strain LFI1238) (Vibrio salmonicida (strain LFI1238)).